A 500-amino-acid chain; its full sequence is L-arabinose isomerase (500 aa).

4 residues coordinate Mn(2+): E306, E333, H350, and H450.

Belongs to the arabinose isomerase family. In terms of assembly, homohexamer. The cofactor is Mn(2+).

It carries out the reaction beta-L-arabinopyranose = L-ribulose. It functions in the pathway carbohydrate degradation; L-arabinose degradation via L-ribulose; D-xylulose 5-phosphate from L-arabinose (bacterial route): step 1/3. Catalyzes the conversion of L-arabinose to L-ribulose. This chain is L-arabinose isomerase, found in Yersinia pestis (strain Pestoides F).